Reading from the N-terminus, the 175-residue chain is MVSLKDSHFDLFHLPAQFALDETALDAAYRTVQTQVHPDRFAAAGDAQKRIAMQWATRANEAYRTLRDPLKRASYLLSLRGVDIGAENNTAMEPAFLMQQMEWREGIEDAAAARNVDALDALLAELRDEKRVRVERLGTLLDSGADQAAAEAVRQLMFIERVASEVGAQIERLET.

In terms of domain architecture, J spans 7–79 (SHFDLFHLPA…LKRASYLLSL (73 aa)).

This sequence belongs to the HscB family. In terms of assembly, interacts with HscA and stimulates its ATPase activity.

Its function is as follows. Co-chaperone involved in the maturation of iron-sulfur cluster-containing proteins. Seems to help targeting proteins to be folded toward HscA. In Burkholderia cenocepacia (strain ATCC BAA-245 / DSM 16553 / LMG 16656 / NCTC 13227 / J2315 / CF5610) (Burkholderia cepacia (strain J2315)), this protein is Co-chaperone protein HscB homolog.